Consider the following 384-residue polypeptide: tRNA 2-selenouridine synthase (384 aa).

The Rhodanese domain maps to 15-138 (FVAGKPLIDL…MRQYLIGVIE (124 aa)). Cysteine 98 (S-selanylcysteine intermediate) is an active-site residue.

The protein belongs to the SelU family. Monomer.

It catalyses the reaction 5-methylaminomethyl-2-thiouridine(34) in tRNA + selenophosphate + (2E)-geranyl diphosphate + H2O + H(+) = 5-methylaminomethyl-2-selenouridine(34) in tRNA + (2E)-thiogeraniol + phosphate + diphosphate. It carries out the reaction 5-methylaminomethyl-2-thiouridine(34) in tRNA + (2E)-geranyl diphosphate = 5-methylaminomethyl-S-(2E)-geranyl-thiouridine(34) in tRNA + diphosphate. The enzyme catalyses 5-methylaminomethyl-S-(2E)-geranyl-thiouridine(34) in tRNA + selenophosphate + H(+) = 5-methylaminomethyl-2-(Se-phospho)selenouridine(34) in tRNA + (2E)-thiogeraniol. The catalysed reaction is 5-methylaminomethyl-2-(Se-phospho)selenouridine(34) in tRNA + H2O = 5-methylaminomethyl-2-selenouridine(34) in tRNA + phosphate. Its function is as follows. Involved in the post-transcriptional modification of the uridine at the wobble position (U34) of tRNA(Lys), tRNA(Glu) and tRNA(Gln). Catalyzes the conversion of 2-thiouridine (S2U-RNA) to 2-selenouridine (Se2U-RNA). Acts in a two-step process involving geranylation of 2-thiouridine (S2U) to S-geranyl-2-thiouridine (geS2U) and subsequent selenation of the latter derivative to 2-selenouridine (Se2U) in the tRNA chain. In Shewanella sp. (strain MR-4), this protein is tRNA 2-selenouridine synthase.